The following is a 110-amino-acid chain: Chloride intracellular channel protein 1 (110 aa).

Alanine 2 is subject to N-acetylalanine. Positions 2-90 (AEEQPQVELF…EEFLEAVLCP (89 aa)) are required for insertion into the membrane. An N6-acetyllysine modification is found at lysine 13. The short motif at 24–27 (CPFS) is the G-site element. Cysteine 24 and cysteine 59 are joined by a disulfide. The chain crosses the membrane as a helical span at residues 26-46 (FSQRLFMVLWLKGVTFNVTTV).

It belongs to the chloride channel CLIC family. Monomer. Homodimer (in vitro). Interacts with TRAPPC2. Dimerization requires a conformation change that leads to the exposure of a large hydrophobic surface. In vivo, this may lead to membrane insertion.

It localises to the nucleus. It is found in the nucleus membrane. The protein resides in the cytoplasm. Its subcellular location is the cell membrane. The protein localises to the endoplasmic reticulum. It carries out the reaction L-dehydroascorbate + 2 glutathione = glutathione disulfide + L-ascorbate. It catalyses the reaction chloride(in) = chloride(out). The catalysed reaction is iodide(out) = iodide(in). The enzyme catalyses thiocyanate(in) = thiocyanate(out). It carries out the reaction nitrate(in) = nitrate(out). It catalyses the reaction bromide(in) = bromide(out). The catalysed reaction is fluoride(in) = fluoride(out). In terms of biological role, in the soluble state, catalyzes glutaredoxin-like thiol disulfide exchange reactions with reduced glutathione as electron donor. Reduces selenite and dehydroascorbate and may act as an antioxidant during oxidative stress response. Can insert into membranes and form voltage-dependent multi-ion conductive channels. Membrane insertion seems to be redox-regulated and may occur only under oxidizing conditions. Involved in regulation of the cell cycle. This Sus scrofa (Pig) protein is Chloride intracellular channel protein 1 (CLIC1).